The sequence spans 1420 residues: ABC transporter G family member 32 (1420 aa).

Positions 135-408 (LRNIHVIGGK…FSSLGFTCPD (274 aa)) constitute an ABC transporter 1 domain. 168 to 175 (GPPSSGKT) is a binding site for ATP. Positions 486–699 (ELLKINFAWQ…AQNAASVNEF (214 aa)) constitute an ABC transmembrane type-2 1 domain. The next 7 membrane-spanning stretches (helical) occupy residues 504–524 (FIYV…MTVF), 544–564 (LYFS…MLVA), 585–605 (LPSW…WVAV), 623–643 (FLLY…MGSL), 648–668 (IVAN…GGFI), 674–694 (IPSW…QNAA), and 735–755 (IGVA…TLFL). Residues 818 to 1070 (LSFSNINYYV…ELIKYFESIE (253 aa)) enclose the ABC transporter 2 domain. 863-870 (GVSGAGKT) contributes to the ATP binding site. In terms of domain architecture, ABC transmembrane type-2 2 spans 1143–1357 (SQFVACLWKQ…TLYGLLVSQY (215 aa)). 7 helical membrane passes run 1162-1182 (YTAV…TICW), 1202-1222 (YAAV…VVSI), 1235-1255 (MYSA…YVLA), 1277-1297 (FLWY…YGMM), 1307-1327 (VASI…GFMI), 1334-1354 (LWWR…GLLV), and 1392-1412 (VSAI…AFAI).

Belongs to the ABC transporter superfamily. ABCG family. PDR (TC 3.A.1.205) subfamily. As to expression, ubiquitous in aerial organs. Higher expression levels in young, expanding tissues than in older tissues. Detected in the epidermal layer.

The protein resides in the cell membrane. Its function is as follows. May be a general defense protein. Required for the formation of the cuticle layer of the cell wall. The chain is ABC transporter G family member 32 from Arabidopsis thaliana (Mouse-ear cress).